We begin with the raw amino-acid sequence, 225 residues long: Cardiotrophin-like cytokine factor 1 (225 aa).

A signal peptide spans 1-27 (MDLRAGDSWGMLACLCTVLWHLPAVPA). N29 carries an N-linked (GlcNAc...) asparagine glycan.

Belongs to the IL-6 superfamily. In terms of assembly, forms a heteromeric complex with cardiotrophin-like cytokine CRLF1/CLF-1; the CRLF1-CLCF1 complex is a ligand for the ciliary neurotrophic factor receptor/CNTFR. The CRLF1-CLCF1 heterodimer binds SORL1 (via N-terminal ectodomain); within this complex, the interaction is mediated predominantly by the CRLF1 moiety. The tripartite signaling complex formed by CRLF1, CLCF1 and CNTFR also binds SORL1.

It localises to the secreted. In complex with CRLF1, forms a heterodimeric neurotropic cytokine that plays a crucial role during neuronal development. Also stimulates B-cells. Binds to and activates the ILST/gp130 receptor. The polypeptide is Cardiotrophin-like cytokine factor 1 (Clcf1) (Mus musculus (Mouse)).